Here is a 101-residue protein sequence, read N- to C-terminus: Small ribosomal subunit protein uS14m (101 aa).

It belongs to the universal ribosomal protein uS14 family. As to quaternary structure, component of the mitochondrial ribosome small subunit (28S) which comprises a 12S rRNA and about 30 distinct proteins. Interacts with LIAT1.

It is found in the mitochondrion. The sequence is that of Small ribosomal subunit protein uS14m (mrps14) from Dictyostelium citrinum (Slime mold).